The chain runs to 91 residues: Small ribosomal subunit protein bS16 (91 aa).

This sequence belongs to the bacterial ribosomal protein bS16 family.

The protein is Small ribosomal subunit protein bS16 of Streptococcus mutans serotype c (strain ATCC 700610 / UA159).